We begin with the raw amino-acid sequence, 186 residues long: UPF0157 protein SCO7215 (186 aa).

It belongs to the UPF0157 (GrpB) family.

The protein is UPF0157 protein SCO7215 of Streptomyces coelicolor (strain ATCC BAA-471 / A3(2) / M145).